A 526-amino-acid polypeptide reads, in one-letter code: Cytochrome P450 monooxygenase BOT4 (526 aa).

Asn5 carries N-linked (GlcNAc...) asparagine glycosylation. Residues 41–61 (CLVAIILCRFIAVWSYNLWFH) form a helical membrane-spanning segment. N-linked (GlcNAc...) asparagine glycosylation is found at Asn205 and Asn281. Position 464 (Cys464) interacts with heme.

It belongs to the cytochrome P450 family. Heme serves as cofactor.

The protein resides in the membrane. It participates in secondary metabolite biosynthesis. Functionally, cytochrome P450 monooxygenase; part of the gene cluster that mediates the biosynthesis of botrydial. Botrydial is necessary for colonization of plant tissue by the T4 strain. It is a strain-dependent virulence factor since highly aggressive strains like SAS56 or B05 still retain substantial virulence when botrydial synthesis is impaired, since they produce also botcinic acid. The first step of botrydial biosynthesis is performed by the sesquiterpene synthase BOT2 which catalyzes the cyclization of farnesyl diphosphate (FPP) to presilphiperfolan-8-beta-ol (PSP). The cytochrome P450 monooxygenase BOT4 then catalyzes the hydroxylation at C-4 to give a probotryane intermediate. Acetylation of the hydroxyl at C-4 is carried out by the acetyltransferase BOT5, followed by the combined action of the P450 monooxygenases BOT3 and BOT1, to yield finally the glycol, via the regio- and stereospecific hydroxylations at C-10 and C-15 of the probotryane intermediates, respectively. The cleavage of the C10-C15 bond of probotryane skeleton is an intriguing and chemically important reaction, which could be mediated by some of the monooxygenases or by a combination of them. It is possible that either BOT3 or BOT1 would oxidize either the 10- or the 15-hydroxy group to the hydroperoxide derivative, which would then undergo heterolytic fragmentation to give the dialdehyde botrydial. Finally, the dehydrogenase BOT7 might be involved in the conversion of botrydial to dihydrobotrydial. In Botryotinia fuckeliana (Noble rot fungus), this protein is Cytochrome P450 monooxygenase BOT4.